The primary structure comprises 206 residues: Ras-related protein ralB-A (206 aa).

21–28 (GSGGVGKS) provides a ligand contact to GTP. An Effector region motif is present at residues 43–51 (YEPTKADSY). GTP-binding positions include 68–72 (DTAGQ) and 128–131 (NKSD). Over residues 180–189 (KMSENKDKNG) the composition is skewed to basic and acidic residues. A disordered region spans residues 180 to 206 (KMSENKDKNGKKSGKSKKGFKQRCCLL). The segment covering 190-200 (KKSGKSKKGFK) has biased composition (basic residues). Cysteine 203 is modified (cysteine methyl ester). Cysteine 203 is lipidated: S-geranylgeranyl cysteine. The propeptide at 204 to 206 (CLL) is removed in mature form.

The protein belongs to the small GTPase superfamily. Ras family. As to quaternary structure, interacts with ralbp1 and rap1gds1. In terms of tissue distribution, weakly expressed in adult tissues and highest levels were found in heart, brain and testes.

The protein resides in the cell membrane. It is found in the midbody. The catalysed reaction is GTP + H2O = GDP + phosphate + H(+). Its function is as follows. Multifunctional GTPase involved in a variety of cellular processes including gene expression, cell migration, cell proliferation, oncogenic transformation and membrane trafficking. Accomplishes its multiple functions by interacting with distinct downstream effectors. Acts as a GTP sensor for GTP-dependent exocytosis of dense core vesicles. Required both to stabilize the assembly of the exocyst complex and to localize functional exocyst complexes to the leading edge of migrating cells. Required for suppression of apoptosis. In late stages of cytokinesis, upon completion of the bridge formation between dividing cells, mediates exocyst recruitment to the midbody to drive abscission. Regulates the actin cytoskeleton to play a role in gastrulation or neurulation. During the cleavage stages, the GTP-bound form induces a cortical reaction that affects the localization of pigment granules. Activated by the FGF pathway via ras and ral-GDS, but independently of raf. Directs ralbp1 to the plasma membrane. Involved in ligand-dependent receptor mediated endocytosis of the EGF and insulin receptors. This chain is Ras-related protein ralB-A (ralb-a), found in Xenopus laevis (African clawed frog).